The sequence spans 273 residues: Ribosomal RNA small subunit methyltransferase A (273 aa).

S-adenosyl-L-methionine contacts are provided by Asn18, Leu20, Gly45, Glu66, Asp91, and Asn113.

Belongs to the class I-like SAM-binding methyltransferase superfamily. rRNA adenine N(6)-methyltransferase family. RsmA subfamily.

It is found in the cytoplasm. The enzyme catalyses adenosine(1518)/adenosine(1519) in 16S rRNA + 4 S-adenosyl-L-methionine = N(6)-dimethyladenosine(1518)/N(6)-dimethyladenosine(1519) in 16S rRNA + 4 S-adenosyl-L-homocysteine + 4 H(+). In terms of biological role, specifically dimethylates two adjacent adenosines (A1518 and A1519) in the loop of a conserved hairpin near the 3'-end of 16S rRNA in the 30S particle. May play a critical role in biogenesis of 30S subunits. This Escherichia coli O139:H28 (strain E24377A / ETEC) protein is Ribosomal RNA small subunit methyltransferase A.